A 382-amino-acid chain; its full sequence is Queuine tRNA-ribosyltransferase (382 aa).

The active-site Proton acceptor is the Asp93. Substrate contacts are provided by residues 93 to 97, Asp147, Gln191, and Gly218; that span reads DSGGF. The tract at residues 249–255 is RNA binding; it reads GVGKPED. Asp268 serves as the catalytic Nucleophile. The segment at 273–277 is RNA binding; important for wobble base 34 recognition; it reads TRNAR. Positions 306, 308, 311, and 337 each coordinate Zn(2+).

It belongs to the queuine tRNA-ribosyltransferase family. Homodimer. Within each dimer, one monomer is responsible for RNA recognition and catalysis, while the other monomer binds to the replacement base PreQ1. Zn(2+) is required as a cofactor.

It catalyses the reaction 7-aminomethyl-7-carbaguanine + guanosine(34) in tRNA = 7-aminomethyl-7-carbaguanosine(34) in tRNA + guanine. Its pathway is tRNA modification; tRNA-queuosine biosynthesis. Catalyzes the base-exchange of a guanine (G) residue with the queuine precursor 7-aminomethyl-7-deazaguanine (PreQ1) at position 34 (anticodon wobble position) in tRNAs with GU(N) anticodons (tRNA-Asp, -Asn, -His and -Tyr). Catalysis occurs through a double-displacement mechanism. The nucleophile active site attacks the C1' of nucleotide 34 to detach the guanine base from the RNA, forming a covalent enzyme-RNA intermediate. The proton acceptor active site deprotonates the incoming PreQ1, allowing a nucleophilic attack on the C1' of the ribose to form the product. After dissociation, two additional enzymatic reactions on the tRNA convert PreQ1 to queuine (Q), resulting in the hypermodified nucleoside queuosine (7-(((4,5-cis-dihydroxy-2-cyclopenten-1-yl)amino)methyl)-7-deazaguanosine). This Actinobacillus pleuropneumoniae serotype 3 (strain JL03) protein is Queuine tRNA-ribosyltransferase.